We begin with the raw amino-acid sequence, 348 residues long: MAIICSFSKLLFVAICLFGHMSLSYCDFSIVGYSQDDLTSTERLIQLFNSWMLKHNKNYKNVDEKLYRFEIFKDNLKYIDERNKMINGYWLGLNEFSDLSNDEFKEKYVGSLPEDYTNQPYDEEFVNEDIVDLPESVDWRAKGAVTPVKHQGYCESCWAFSTVATVEGINKIKTGNLVELSEQELVDCDKQSYGCNRGYQSTSLQYVAQNGIHLRAKYPYIAKQQTCRANQVGGPKVKTNGVGRVQSNNEGSLLNAIAHQPVSVVVESAGRDFQNYKGGIFEGSCGTKVDHAVTAVGYGKSGGKGYILIKNSWGPGWGENGYIRIRRASGNSPGVCGVYRSSYYPIKN.

Positions 1–18 are cleaved as a signal peptide; the sequence is MAIICSFSKLLFVAICLF. Positions 19 to 132 are cleaved as a propeptide — activation peptide; that stretch reads GHMSLSYCDF…EEFVNEDIVD (114 aa). Disulfide bonds link cysteine 154/cysteine 195, cysteine 188/cysteine 227, and cysteine 285/cysteine 336. Residue cysteine 157 is part of the active site. Catalysis depends on residues histidine 291 and asparagine 311.

The protein belongs to the peptidase C1 family.

It catalyses the reaction Preferential cleavage: Gly-|-Xaa, in proteins and in small molecule substrates.. Its activity is regulated as follows. Not inhibited by cystatin. Its function is as follows. Thiol protease with a substrate specificity very different from the other thiol proteases. In Carica papaya (Papaya), this protein is Papaya proteinase 4.